Here is a 76-residue protein sequence, read N- to C-terminus: Acyl carrier protein (76 aa).

In terms of domain architecture, Carrier spans 1–76; sequence MATFDEVKEV…AAVDYIGSKQ (76 aa). Ser36 carries the post-translational modification O-(pantetheine 4'-phosphoryl)serine.

The protein belongs to the acyl carrier protein (ACP) family. 4'-phosphopantetheine is transferred from CoA to a specific serine of apo-ACP by AcpS. This modification is essential for activity because fatty acids are bound in thioester linkage to the sulfhydryl of the prosthetic group.

The protein localises to the cytoplasm. It participates in lipid metabolism; fatty acid biosynthesis. Its function is as follows. Carrier of the growing fatty acid chain in fatty acid biosynthesis. The sequence is that of Acyl carrier protein from Deinococcus geothermalis (strain DSM 11300 / CIP 105573 / AG-3a).